A 250-amino-acid polypeptide reads, in one-letter code: 23S rRNA (guanine(2535)-N(1))-methyltransferase (250 aa).

The enzyme catalyses guanosine(2535) in 23S rRNA + S-adenosyl-L-methionine = N(1)-methylguanosine(2535) in 23S rRNA + S-adenosyl-L-homocysteine + H(+). Its function is as follows. Specifically methylates the guanine-2535 in 23S ribosomal RNA. Confers resistance to antibiotic avilamycin, an orthosomycin antibiotic. The polypeptide is 23S rRNA (guanine(2535)-N(1))-methyltransferase (aviRa) (Streptomyces viridochromogenes).